Here is a 259-residue protein sequence, read N- to C-terminus: BTB/POZ domain-containing protein KCTD4 (259 aa).

Residues 1–25 are disordered; the sequence is MERKINRREKEKEYEGKHNSLEDTD. Residues 33–134 form the BTB domain; it reads TLMTLNVGGY…EVKSRWEKEQ (102 aa).

In Homo sapiens (Human), this protein is BTB/POZ domain-containing protein KCTD4 (KCTD4).